Reading from the N-terminus, the 147-residue chain is Phosphoribosyl-AMP cyclohydrolase 2 (147 aa).

Asp-99 lines the Mg(2+) pocket. Cys-100 serves as a coordination point for Zn(2+). Mg(2+)-binding residues include Asp-101 and Asp-103. 2 residues coordinate Zn(2+): Cys-116 and Cys-123.

Belongs to the PRA-CH family. In terms of assembly, homodimer. Requires Mg(2+) as cofactor. The cofactor is Zn(2+).

The protein resides in the cytoplasm. The enzyme catalyses 1-(5-phospho-beta-D-ribosyl)-5'-AMP + H2O = 1-(5-phospho-beta-D-ribosyl)-5-[(5-phospho-beta-D-ribosylamino)methylideneamino]imidazole-4-carboxamide. It participates in amino-acid biosynthesis; L-histidine biosynthesis; L-histidine from 5-phospho-alpha-D-ribose 1-diphosphate: step 3/9. Functionally, catalyzes the hydrolysis of the adenine ring of phosphoribosyl-AMP. The chain is Phosphoribosyl-AMP cyclohydrolase 2 from Pseudomonas fluorescens (strain ATCC BAA-477 / NRRL B-23932 / Pf-5).